We begin with the raw amino-acid sequence, 85 residues long: CDC42 small effector protein homolog (85 aa).

S-palmitoyl cysteine attachment occurs at residues C14 and C15. Residues 37–50 (IGNPTNFVHTGHIG) enclose the CRIB domain. Residues S78 and S81 each carry the phosphoserine modification.

It belongs to the CDC42SE/SPEC family.

The protein localises to the cytoplasm. Its subcellular location is the cytoskeleton. The protein resides in the cell membrane. Its function is as follows. Probably involved in the organization of the actin cytoskeleton by acting downstream of CDC42, inducing actin filament assembly. In Drosophila melanogaster (Fruit fly), this protein is CDC42 small effector protein homolog (Spec2).